We begin with the raw amino-acid sequence, 396 residues long: S-adenosylmethionine synthase (396 aa).

Residue His-15 participates in ATP binding. Residue Asp-17 participates in Mg(2+) binding. Glu-43 provides a ligand contact to K(+). 2 residues coordinate L-methionine: Glu-56 and Gln-99. The segment at 99-109 is flexible loop; it reads QSSDIAQGVDR. ATP contacts are provided by residues 175–177, 241–242, Asp-250, 256–257, Ser-273, and Lys-277; these read DGK, RF, and RK. Asp-250 is a binding site for L-methionine. L-methionine is bound at residue Lys-281.

Belongs to the AdoMet synthase family. As to quaternary structure, homotetramer; dimer of dimers. It depends on Mg(2+) as a cofactor. K(+) serves as cofactor.

The protein localises to the cytoplasm. The enzyme catalyses L-methionine + ATP + H2O = S-adenosyl-L-methionine + phosphate + diphosphate. It functions in the pathway amino-acid biosynthesis; S-adenosyl-L-methionine biosynthesis; S-adenosyl-L-methionine from L-methionine: step 1/1. Functionally, catalyzes the formation of S-adenosylmethionine (AdoMet) from methionine and ATP. The overall synthetic reaction is composed of two sequential steps, AdoMet formation and the subsequent tripolyphosphate hydrolysis which occurs prior to release of AdoMet from the enzyme. This Pelotomaculum thermopropionicum (strain DSM 13744 / JCM 10971 / SI) protein is S-adenosylmethionine synthase.